We begin with the raw amino-acid sequence, 388 residues long: Succinate--CoA ligase [ADP-forming] subunit beta (388 aa).

In terms of domain architecture, ATP-grasp spans 9–244 (KQLFAEYGLP…PSQDDPREAH (236 aa)). Residues K46, 53 to 55 (GRG), E99, T102, and E107 contribute to the ATP site. The Mg(2+) site is built by N199 and D213. Residues N264 and 321–323 (GIV) each bind substrate.

Belongs to the succinate/malate CoA ligase beta subunit family. In terms of assembly, heterotetramer of two alpha and two beta subunits. Requires Mg(2+) as cofactor.

It catalyses the reaction succinate + ATP + CoA = succinyl-CoA + ADP + phosphate. The enzyme catalyses GTP + succinate + CoA = succinyl-CoA + GDP + phosphate. The protein operates within carbohydrate metabolism; tricarboxylic acid cycle; succinate from succinyl-CoA (ligase route): step 1/1. Succinyl-CoA synthetase functions in the citric acid cycle (TCA), coupling the hydrolysis of succinyl-CoA to the synthesis of either ATP or GTP and thus represents the only step of substrate-level phosphorylation in the TCA. The beta subunit provides nucleotide specificity of the enzyme and binds the substrate succinate, while the binding sites for coenzyme A and phosphate are found in the alpha subunit. In Pseudomonas fluorescens (strain Pf0-1), this protein is Succinate--CoA ligase [ADP-forming] subunit beta.